Consider the following 379-residue polypeptide: Carbamoyl phosphate synthase small chain (379 aa).

The segment at 1–183 is CPSase; that stretch reads MTSQDRSEAV…EAYVVEPDGE (183 aa). Positions 51, 235, and 237 each coordinate L-glutamine. A Glutamine amidotransferase type-1 domain is found at 185-379; it reads LYTVVAYDMG…FVELIQANKK (195 aa). The active-site Nucleophile is Cys-263. L-glutamine contacts are provided by Phe-264, Gln-267, Asn-305, Gly-307, and Phe-308. Residues His-353 and Glu-355 contribute to the active site.

It belongs to the CarA family. In terms of assembly, composed of two chains; the small (or glutamine) chain promotes the hydrolysis of glutamine to ammonia, which is used by the large (or ammonia) chain to synthesize carbamoyl phosphate. Tetramer of heterodimers (alpha,beta)4.

The catalysed reaction is hydrogencarbonate + L-glutamine + 2 ATP + H2O = carbamoyl phosphate + L-glutamate + 2 ADP + phosphate + 2 H(+). It catalyses the reaction L-glutamine + H2O = L-glutamate + NH4(+). It functions in the pathway amino-acid biosynthesis; L-arginine biosynthesis; carbamoyl phosphate from bicarbonate: step 1/1. Its pathway is pyrimidine metabolism; UMP biosynthesis via de novo pathway; (S)-dihydroorotate from bicarbonate: step 1/3. Small subunit of the glutamine-dependent carbamoyl phosphate synthetase (CPSase). CPSase catalyzes the formation of carbamoyl phosphate from the ammonia moiety of glutamine, carbonate, and phosphate donated by ATP, constituting the first step of 2 biosynthetic pathways, one leading to arginine and/or urea and the other to pyrimidine nucleotides. The small subunit (glutamine amidotransferase) binds and cleaves glutamine to supply the large subunit with the substrate ammonia. The polypeptide is Carbamoyl phosphate synthase small chain (Corynebacterium diphtheriae (strain ATCC 700971 / NCTC 13129 / Biotype gravis)).